The following is a 1031-amino-acid chain: Error-prone DNA polymerase (1031 aa).

The protein belongs to the DNA polymerase type-C family. DnaE2 subfamily.

It localises to the cytoplasm. It catalyses the reaction DNA(n) + a 2'-deoxyribonucleoside 5'-triphosphate = DNA(n+1) + diphosphate. Its function is as follows. DNA polymerase involved in damage-induced mutagenesis and translesion synthesis (TLS). It is not the major replicative DNA polymerase. This chain is Error-prone DNA polymerase, found in Pseudomonas aeruginosa (strain ATCC 15692 / DSM 22644 / CIP 104116 / JCM 14847 / LMG 12228 / 1C / PRS 101 / PAO1).